A 308-amino-acid chain; its full sequence is uncharacterized protein (308 aa).

The N-terminal stretch at 1 to 19 is a signal peptide; sequence MKLLLILILIINNYNLCLS. N-linked (GlcNAc...) asparagine glycans are attached at residues asparagine 25 and asparagine 300.

The protein resides in the secreted. This is an uncharacterized protein from Dictyostelium discoideum (Social amoeba).